We begin with the raw amino-acid sequence, 326 residues long: Glyoxylate/hydroxypyruvate reductase B (326 aa).

Active-site residues include arginine 237 and glutamate 266. Histidine 285 functions as the Proton donor in the catalytic mechanism.

It belongs to the D-isomer specific 2-hydroxyacid dehydrogenase family. GhrB subfamily. Homodimer.

It is found in the cytoplasm. It carries out the reaction glycolate + NADP(+) = glyoxylate + NADPH + H(+). It catalyses the reaction (R)-glycerate + NAD(+) = 3-hydroxypyruvate + NADH + H(+). The enzyme catalyses (R)-glycerate + NADP(+) = 3-hydroxypyruvate + NADPH + H(+). In terms of biological role, catalyzes the NADPH-dependent reduction of glyoxylate and hydroxypyruvate into glycolate and glycerate, respectively. This chain is Glyoxylate/hydroxypyruvate reductase B, found in Yersinia pestis bv. Antiqua (strain Nepal516).